The following is a 360-amino-acid chain: Putative mRNA-decapping protein (360 aa).

The CCHC-type zinc-finger motif lies at 11–28 (HICSNCGRSGHEFRNCIE). One can recognise a Nudix hydrolase domain in the interval 163 to 347 (YKYDNILYHF…KKRILTRVYL (185 aa)). Residues 242–264 (GRRDKRSEENMVCACREFEEETG) carry the Nudix box motif. A Mg(2+)-binding site is contributed by Glu-249. The Nucleophile role is filled by Glu-258. A Mg(2+)-binding site is contributed by Glu-262.

Belongs to the Nudix hydrolase family. DIPP subfamily. Mg(2+) is required as a cofactor. Requires Mn(2+) as cofactor.

It carries out the reaction diphospho-myo-inositol polyphosphate + H2O = myo-inositol polyphosphate + phosphate.. Functionally, might function as a decapping enzyme required for the removal of the 5'-end m7GpppN cap tethered to viral and host mRNAs to allow their decay in cells. In addition to the mRNA cap, probably also efficiently hydrolyzes diphosphoinositol polyphosphates. The polypeptide is Putative mRNA-decapping protein (Acanthamoeba polyphaga (Amoeba)).